A 140-amino-acid chain; its full sequence is Putative esterase SSO2140 (140 aa).

The protein belongs to the thioesterase PaaI family.

In Saccharolobus solfataricus (strain ATCC 35092 / DSM 1617 / JCM 11322 / P2) (Sulfolobus solfataricus), this protein is Putative esterase SSO2140.